A 595-amino-acid polypeptide reads, in one-letter code: uncharacterized protein (595 aa).

Residues 1-21 (MSSQLKSTWAPVPSTKPSQPC) are disordered. 11 WD repeats span residues 56 to 95 (EHTA…KILK), 100 to 143 (AISG…GEIF), 144 to 184 (GHSS…FNRS), 187 to 226 (VHSK…QVYE), 229 to 268 (AHKG…LIRE), 313 to 352 (GHQR…AFPL), 356 to 393 (SHTN…FAKD), 433 to 472 (KTIY…LCEV), 477 to 516 (DSTA…VITS), 520 to 559 (FHTG…KYIA), and 564 to 594 (HSLG…WSVT).

This sequence belongs to the WD repeat AIP1 family.

This is an uncharacterized protein from Schizosaccharomyces pombe (strain 972 / ATCC 24843) (Fission yeast).